Here is a 236-residue protein sequence, read N- to C-terminus: Purine nucleoside phosphorylase DeoD-type 2 (236 aa).

H5 provides a ligand contact to a purine D-ribonucleoside. Phosphate is bound by residues G21, R25, R44, and 88-91 (RVGS). Residues 180–182 (DME) and 204–205 (SD) contribute to the a purine D-ribonucleoside site. The active-site Proton donor is D205.

The protein belongs to the PNP/UDP phosphorylase family. In terms of assembly, homohexamer; trimer of homodimers.

The enzyme catalyses a purine D-ribonucleoside + phosphate = a purine nucleobase + alpha-D-ribose 1-phosphate. The catalysed reaction is a purine 2'-deoxy-D-ribonucleoside + phosphate = a purine nucleobase + 2-deoxy-alpha-D-ribose 1-phosphate. Catalyzes the reversible phosphorolytic breakdown of the N-glycosidic bond in the beta-(deoxy)ribonucleoside molecules, with the formation of the corresponding free purine bases and pentose-1-phosphate. The sequence is that of Purine nucleoside phosphorylase DeoD-type 2 from Aliivibrio fischeri (strain ATCC 700601 / ES114) (Vibrio fischeri).